Reading from the N-terminus, the 214-residue chain is Orotate phosphoribosyltransferase (214 aa).

Lys-26 serves as a coordination point for 5-phospho-alpha-D-ribose 1-diphosphate. 34–35 (FF) contacts orotate. 5-phospho-alpha-D-ribose 1-diphosphate is bound by residues 72–73 (YK), Arg-99, Lys-100, Lys-103, His-105, and 124–132 (DDVITAGTA). Orotate-binding residues include Thr-128 and Arg-156.

It belongs to the purine/pyrimidine phosphoribosyltransferase family. PyrE subfamily. In terms of assembly, homodimer. Mg(2+) serves as cofactor.

The catalysed reaction is orotidine 5'-phosphate + diphosphate = orotate + 5-phospho-alpha-D-ribose 1-diphosphate. The protein operates within pyrimidine metabolism; UMP biosynthesis via de novo pathway; UMP from orotate: step 1/2. Catalyzes the transfer of a ribosyl phosphate group from 5-phosphoribose 1-diphosphate to orotate, leading to the formation of orotidine monophosphate (OMP). The sequence is that of Orotate phosphoribosyltransferase from Pseudoalteromonas translucida (strain TAC 125).